A 208-amino-acid polypeptide reads, in one-letter code: Phosphoribosyl-dephospho-CoA transferase (208 aa).

Catalysis depends on residues Asp133 and Asp135.

It belongs to the MdcG family.

The catalysed reaction is apo-[malonate decarboxylase ACP] + 2'-(5''-triphospho-alpha-D-ribosyl)-3'-dephospho-CoA = holo-[malonate decarboxylase ACP] + diphosphate. In terms of biological role, transfers 2'-(5-triphosphoribosyl)-3'-dephosphocoenzyme-A to the apo-[acyl-carrier-protein] of the malonate decarboxylase to yield holo-[acyl-carrier-protein]. This Pseudomonas fluorescens (strain ATCC BAA-477 / NRRL B-23932 / Pf-5) protein is Phosphoribosyl-dephospho-CoA transferase.